A 240-amino-acid polypeptide reads, in one-letter code: LexA repressor (240 aa).

Residues 26-46 (FDEMKDALDLKSKSGIHRLIT) constitute a DNA-binding region (H-T-H motif). Residues Ser-161 and Lys-199 each act as for autocatalytic cleavage activity in the active site.

The protein belongs to the peptidase S24 family. In terms of assembly, homodimer.

The catalysed reaction is Hydrolysis of Ala-|-Gly bond in repressor LexA.. In terms of biological role, represses a number of genes involved in the response to DNA damage (SOS response), including recA and lexA. In the presence of single-stranded DNA, RecA interacts with LexA causing an autocatalytic cleavage which disrupts the DNA-binding part of LexA, leading to derepression of the SOS regulon and eventually DNA repair. The sequence is that of LexA repressor from Methylobacterium nodulans (strain LMG 21967 / CNCM I-2342 / ORS 2060).